The sequence spans 327 residues: Methionyl-tRNA formyltransferase (327 aa).

121–124 (SLLP) serves as a coordination point for (6S)-5,6,7,8-tetrahydrofolate.

It belongs to the Fmt family.

The enzyme catalyses L-methionyl-tRNA(fMet) + (6R)-10-formyltetrahydrofolate = N-formyl-L-methionyl-tRNA(fMet) + (6S)-5,6,7,8-tetrahydrofolate + H(+). Attaches a formyl group to the free amino group of methionyl-tRNA(fMet). The formyl group appears to play a dual role in the initiator identity of N-formylmethionyl-tRNA by promoting its recognition by IF2 and preventing the misappropriation of this tRNA by the elongation apparatus. In Burkholderia pseudomallei (strain 1710b), this protein is Methionyl-tRNA formyltransferase.